We begin with the raw amino-acid sequence, 254 residues long: MASAGGDECEGAAPEADRPHQRPFLIGVSGGTASGKSTVCEKIMGLLGQNEVEQRQRKVVILSQDRFYKVLTAEQKAKALKGQYNFDHPDAFDNDLMHRTLKNIVEGKTVEVPTYDFVTHSSQEIRDMFHLRLFVDTDSDVRLSRRVLRDVRRGRDLEQILTQYTTFVKPAFEEFCLPTKKYADVIIPRGVDNMVAINLIVQHIQDILNGDICKWHRGGSNGRSYKRTFSEPGDHPGMLTSGKRSHLESSSRPH.

A disordered region spans residues 1 to 29 (MASAGGDECEGAAPEADRPHQRPFLIGVS). 30–38 (GGTASGKST) is an ATP binding site. Residues aspartate 87, tyrosine 115, histidine 120, arginine 146, arginine 155, and glutamine 163 each contribute to the substrate site. ATP is bound at residue aspartate 192. Residues 224 to 254 (SYKRTFSEPGDHPGMLTSGKRSHLESSSRPH) form a disordered region. Threonine 228 carries the post-translational modification Phosphothreonine. Position 230 is a phosphoserine (serine 230). Basic and acidic residues predominate over residues 245-254 (SHLESSSRPH).

The protein belongs to the uridine kinase family.

It catalyses the reaction uridine + ATP = UMP + ADP + H(+). It carries out the reaction cytidine + ATP = CMP + ADP + H(+). The protein operates within pyrimidine metabolism; CTP biosynthesis via salvage pathway; CTP from cytidine: step 1/3. It functions in the pathway pyrimidine metabolism; UMP biosynthesis via salvage pathway; UMP from uridine: step 1/1. Phosphorylates uridine and cytidine to uridine monophosphate and cytidine monophosphate. Does not phosphorylate deoxyribonucleosides or purine ribonucleosides. Can use ATP or GTP as a phosphate donor. In Macaca fascicularis (Crab-eating macaque), this protein is Uridine-cytidine kinase 1 (UCK1).